A 400-amino-acid chain; its full sequence is Eukaryotic translation initiation factor 3 subunit M (400 aa).

The region spanning 180–354 (LIAKIYSALV…QSFAVHRAQK (175 aa)) is the PCI domain.

This sequence belongs to the eIF-3 subunit M family. As to quaternary structure, component of the eukaryotic translation initiation factor 3 (eIF-3) complex.

It is found in the cytoplasm. In terms of biological role, component of the eukaryotic translation initiation factor 3 (eIF-3) complex, which is involved in protein synthesis of a specialized repertoire of mRNAs and, together with other initiation factors, stimulates binding of mRNA and methionyl-tRNAi to the 40S ribosome. The eIF-3 complex specifically targets and initiates translation of a subset of mRNAs involved in cell proliferation. This Yarrowia lipolytica (strain CLIB 122 / E 150) (Yeast) protein is Eukaryotic translation initiation factor 3 subunit M.